Here is a 621-residue protein sequence, read N- to C-terminus: NADH-quinone oxidoreductase subunit L (621 aa).

A run of 17 helical transmembrane segments spans residues Asn2–Ile22, Ile33–Leu53, Cys59–Asn79, Phe80–Ile100, Leu123–Gly143, Ile169–Ile189, Val210–Ala230, Thr249–Ala269, Leu274–Ile294, Ile306–Ala326, Val338–Leu358, Phe374–Leu394, Asn412–Phe432, Leu460–Leu480, Phe500–Leu520, Phe537–Val557, and Tyr597–Ile617.

Belongs to the complex I subunit 5 family. As to quaternary structure, composed of 13 different subunits. Subunits NuoA, H, J, K, L, M, N constitute the membrane sector of the complex.

It localises to the cell membrane. It catalyses the reaction a quinone + NADH + 5 H(+)(in) = a quinol + NAD(+) + 4 H(+)(out). In terms of biological role, NDH-1 shuttles electrons from NADH, via FMN and iron-sulfur (Fe-S) centers, to quinones in the respiratory chain. Couples the redox reaction to proton translocation (for every two electrons transferred, four hydrogen ions are translocated across the cytoplasmic membrane), and thus conserves the redox energy in a proton gradient. This is NADH-quinone oxidoreductase subunit L (nuoL) from Buchnera aphidicola subsp. Baizongia pistaciae (strain Bp).